We begin with the raw amino-acid sequence, 473 residues long: UDP-N-acetylmuramate--L-alanine ligase (473 aa).

Position 112–118 (112–118) interacts with ATP; it reads GTHGKTT.

It belongs to the MurCDEF family.

Its subcellular location is the cytoplasm. It carries out the reaction UDP-N-acetyl-alpha-D-muramate + L-alanine + ATP = UDP-N-acetyl-alpha-D-muramoyl-L-alanine + ADP + phosphate + H(+). Its pathway is cell wall biogenesis; peptidoglycan biosynthesis. Its function is as follows. Cell wall formation. This is UDP-N-acetylmuramate--L-alanine ligase from Nitrosomonas europaea (strain ATCC 19718 / CIP 103999 / KCTC 2705 / NBRC 14298).